The chain runs to 291 residues: Acetyl-coenzyme A carboxylase carboxyl transferase subunit beta (291 aa).

In terms of domain architecture, CoA carboxyltransferase N-terminal spans 34–291 (MWTKCSNCNN…LILHGVNKYE (258 aa)). Cys-38, Cys-41, Cys-57, and Cys-60 together coordinate Zn(2+). Residues 38–60 (CSNCNNMIYYEDLENNKYVCTKC) form a C4-type zinc finger.

Belongs to the AccD/PCCB family. As to quaternary structure, acetyl-CoA carboxylase is a heterohexamer composed of biotin carboxyl carrier protein (AccB), biotin carboxylase (AccC) and two subunits each of ACCase subunit alpha (AccA) and ACCase subunit beta (AccD). Zn(2+) is required as a cofactor.

It localises to the cytoplasm. The enzyme catalyses N(6)-carboxybiotinyl-L-lysyl-[protein] + acetyl-CoA = N(6)-biotinyl-L-lysyl-[protein] + malonyl-CoA. Its pathway is lipid metabolism; malonyl-CoA biosynthesis; malonyl-CoA from acetyl-CoA: step 1/1. In terms of biological role, component of the acetyl coenzyme A carboxylase (ACC) complex. Biotin carboxylase (BC) catalyzes the carboxylation of biotin on its carrier protein (BCCP) and then the CO(2) group is transferred by the transcarboxylase to acetyl-CoA to form malonyl-CoA. The chain is Acetyl-coenzyme A carboxylase carboxyl transferase subunit beta from Clostridium botulinum (strain Eklund 17B / Type B).